The sequence spans 150 residues: Sulfur-rich protein, serovar D (150 aa).

The next 2 helical transmembrane spans lie at V41–A61 and A67–L87.

It localises to the membrane. The polypeptide is Sulfur-rich protein, serovar D (srp) (Chlamydia trachomatis serovar D (strain ATCC VR-885 / DSM 19411 / UW-3/Cx)).